The primary structure comprises 428 residues: MRVVILGSGVVGVASAYYLARAGHEVTVIDREAGPALDTSFANAGQISPGYAAPWAAPGVPLKAVKWMFEKHAPLAIRLDGTRFQLQWMWQMLRNCTTERYALNKGRMVRLAEYSRDCLQALRAETAIQYEGRTGGTLQVFRTQQQLDGAAKDIAVLREANVPFELLSSDELKKAEPALAAVSHKLTGGLRLPGDETGDCQLFTTRLAALAEQLGVKFRFNTRIDALAVAGGKIAGVQCGGEMVRADAYVVALGSYSTNLVASLVKIPVYPLKGYSITAPIVDAAKAPVSTVLDETYKIAITRFDDRIRVGGMAEIVGFDKRLRDARRGTLEMCVNDLFPGGGDTAKATFWTGLRPMTPDGTPIVGRTPVPNLFLNTGHGTLGWTMSCGSGQLLADLMSGKKPAIRADDLSVHRYLSETDGEHRPAYA.

3-17 contributes to the FAD binding site; sequence VVILGSGVVGVASAY.

It belongs to the DadA oxidoreductase family. FAD is required as a cofactor.

It catalyses the reaction a D-alpha-amino acid + A + H2O = a 2-oxocarboxylate + AH2 + NH4(+). It functions in the pathway amino-acid degradation; D-alanine degradation; NH(3) and pyruvate from D-alanine: step 1/1. Its function is as follows. Oxidative deamination of D-amino acids. In Burkholderia mallei (strain NCTC 10247), this protein is D-amino acid dehydrogenase.